A 120-amino-acid chain; its full sequence is NAD(P)H-quinone oxidoreductase subunit 3, chloroplastic (120 aa).

3 helical membrane-spanning segments follow: residues 9 to 29 (IFWAFLIISIFIPILAFTISG), 64 to 84 (MFALVFVVFDVETVFLYPWAM), and 88 to 108 (VLGISVFIEALIFVLILIVGS).

The protein belongs to the complex I subunit 3 family. In terms of assembly, NDH is composed of at least 16 different subunits, 5 of which are encoded in the nucleus.

It is found in the plastid. The protein resides in the chloroplast thylakoid membrane. The enzyme catalyses a plastoquinone + NADH + (n+1) H(+)(in) = a plastoquinol + NAD(+) + n H(+)(out). It carries out the reaction a plastoquinone + NADPH + (n+1) H(+)(in) = a plastoquinol + NADP(+) + n H(+)(out). NDH shuttles electrons from NAD(P)H:plastoquinone, via FMN and iron-sulfur (Fe-S) centers, to quinones in the photosynthetic chain and possibly in a chloroplast respiratory chain. The immediate electron acceptor for the enzyme in this species is believed to be plastoquinone. Couples the redox reaction to proton translocation, and thus conserves the redox energy in a proton gradient. This is NAD(P)H-quinone oxidoreductase subunit 3, chloroplastic from Lotus japonicus (Lotus corniculatus var. japonicus).